We begin with the raw amino-acid sequence, 878 residues long: Alanine--tRNA ligase (878 aa).

The Zn(2+) site is built by His-566, His-570, Cys-668, and His-672.

It belongs to the class-II aminoacyl-tRNA synthetase family. Zn(2+) is required as a cofactor.

The protein localises to the cytoplasm. It carries out the reaction tRNA(Ala) + L-alanine + ATP = L-alanyl-tRNA(Ala) + AMP + diphosphate. Its function is as follows. Catalyzes the attachment of alanine to tRNA(Ala) in a two-step reaction: alanine is first activated by ATP to form Ala-AMP and then transferred to the acceptor end of tRNA(Ala). Also edits incorrectly charged Ser-tRNA(Ala) and Gly-tRNA(Ala) via its editing domain. The chain is Alanine--tRNA ligase from Bacillus subtilis (strain 168).